The primary structure comprises 512 residues: Dihydroniloticin synthase CYP71CD2 (512 aa).

A helical transmembrane segment spans residues 1–21; sequence MNLQLDYFSITSFLVFLVVLF. Heme is bound at residue N436.

The protein belongs to the cytochrome P450 family. Requires heme as cofactor. Mainly expressed in petioles and roots, and, to a lower extent, in leaves.

Its subcellular location is the membrane. It catalyses the reaction tirucalla-7,24-dien-3beta-ol + 2 reduced [NADPH--hemoprotein reductase] + 2 O2 = dihydroniloticin + 2 oxidized [NADPH--hemoprotein reductase] + 2 H2O + 2 H(+). It functions in the pathway secondary metabolite biosynthesis; terpenoid biosynthesis. Its function is as follows. Monooxygenase involved in the biosynthesis of limonoids triterpene natural products such as azadirachtin, an antifeedant widely used as bioinsecticide, and possessing many medicinal applications including anti-tumoral, anti-malarial, anti-rheumatic, antibacterial, anti-inflammatory, anti-pyretic and diuretic effects. Catalyzes the conversion of tirucalladienol to dihydroniloticin. The chain is Dihydroniloticin synthase CYP71CD2 from Melia azedarach (Chinaberry tree).